The following is a 345-amino-acid chain: Cytoskeleton protein RodZ (345 aa).

Residues 1–111 lie on the Cytoplasmic side of the membrane; it reads MNTEASQDQT…LGKKHKKRDG (111 aa). Positions 19 to 79 constitute an HTH cro/C1-type domain; that stretch reads LRQARESLGL…KLVHLPEDEL (61 aa). A DNA-binding region (H-T-H motif) is located at residues 30–49; sequence QQTVAERLCLKVSTIRDIEE. A helical; Signal-anchor for type II membrane protein membrane pass occupies residues 112 to 132; the sequence is WLMSFTWLIVLVVLGLTGAWW. Residues 133 to 345 lie on the Periplasmic side of the membrane; the sequence is WQNHQAQQAE…RVARLTVGVE (213 aa). The segment at 151–260 is disordered; the sequence is SAQLSQNGGQ…LPTADAGVSG (110 aa). Over residues 188 to 225 the composition is skewed to polar residues; that stretch reads PLTNHSGSAITNSATTSSVPKTTSTEPVDTANTNTTMH. Low complexity predominate over residues 229–241; the sequence is AASAAVSPSQVPQ.

It belongs to the RodZ family.

It localises to the cell inner membrane. Functionally, cytoskeletal protein that is involved in cell-shape control through regulation of the length of the long axis. The sequence is that of Cytoskeleton protein RodZ from Yersinia pestis (strain Pestoides F).